The following is a 77-amino-acid chain: UPF0154 protein LCK_00994 (77 aa).

The helical transmembrane segment at 5–25 threads the bilayer; that stretch reads FGILIFVLGLVIGLVIGFFVA. A disordered region spans residues 50-77; that stretch reads SMGQKPSQKKLNQMMAQMKQQSEQSQKK.

The protein belongs to the UPF0154 family.

The protein resides in the cell membrane. In Leuconostoc citreum (strain KM20), this protein is UPF0154 protein LCK_00994.